We begin with the raw amino-acid sequence, 407 residues long: Aminomethyltransferase, mitochondrial (407 aa).

Residues 1-29 constitute a mitochondrion transit peptide; that stretch reads MRGGLWQLGQSITRRLGQSDKKTIVRRCY. Substrate-binding residues include E234, R265, and Y403.

It belongs to the GcvT family. As to quaternary structure, the glycine cleavage system is composed of four proteins: P, T, L and H.

It is found in the mitochondrion. The enzyme catalyses N(6)-[(R)-S(8)-aminomethyldihydrolipoyl]-L-lysyl-[protein] + (6S)-5,6,7,8-tetrahydrofolate = N(6)-[(R)-dihydrolipoyl]-L-lysyl-[protein] + (6R)-5,10-methylene-5,6,7,8-tetrahydrofolate + NH4(+). Functionally, the glycine cleavage system catalyzes the degradation of glycine. This Flaveria anomala (Yellowtops) protein is Aminomethyltransferase, mitochondrial (GDCST).